The primary structure comprises 349 residues: Phosphoribosylformylglycinamidine cyclo-ligase (349 aa).

Belongs to the AIR synthase family.

It is found in the cytoplasm. The catalysed reaction is 2-formamido-N(1)-(5-O-phospho-beta-D-ribosyl)acetamidine + ATP = 5-amino-1-(5-phospho-beta-D-ribosyl)imidazole + ADP + phosphate + H(+). The protein operates within purine metabolism; IMP biosynthesis via de novo pathway; 5-amino-1-(5-phospho-D-ribosyl)imidazole from N(2)-formyl-N(1)-(5-phospho-D-ribosyl)glycinamide: step 2/2. The protein is Phosphoribosylformylglycinamidine cyclo-ligase of Lactobacillus delbrueckii subsp. bulgaricus (strain ATCC 11842 / DSM 20081 / BCRC 10696 / JCM 1002 / NBRC 13953 / NCIMB 11778 / NCTC 12712 / WDCM 00102 / Lb 14).